Consider the following 156-residue polypeptide: Small ribosomal subunit protein uS7 (156 aa).

Belongs to the universal ribosomal protein uS7 family. As to quaternary structure, part of the 30S ribosomal subunit. Contacts proteins S9 and S11.

In terms of biological role, one of the primary rRNA binding proteins, it binds directly to 16S rRNA where it nucleates assembly of the head domain of the 30S subunit. Is located at the subunit interface close to the decoding center, probably blocks exit of the E-site tRNA. The protein is Small ribosomal subunit protein uS7 of Anaeromyxobacter sp. (strain Fw109-5).